The sequence spans 205 residues: Spermatogenesis-associated protein 24 (205 aa).

Residues 17 to 167 (LAFDQLRDVI…QKQNFRNHIS (151 aa)) adopt a coiled-coil conformation. Residues 138 to 185 (EDILNGKENEIKELQQVISQQKQNFRNHISDFRIQKQQETYMAQVLDQ) form a required for interaction with CBX5 and TBPL1 region. The segment at 185 to 205 (QKRKKATGMRRARSRQCSREK) is disordered. The segment covering 186 to 205 (KRKKATGMRRARSRQCSREK) has biased composition (basic residues).

Belongs to the SPATA24 family. As to quaternary structure, homodimer. Interacts with CBX3, CBX5, GMNN, GTF2B, TBPL1 and the polycomb proteins PHCF2, RNF2 and SCMH1 but not with CBX1 or PCGF2. As to expression, testis-specific (at protein level).

The protein resides in the cytoplasm. Its subcellular location is the nucleus. It localises to the nucleolus. It is found in the nucleoplasm. Binds DNA with high affinity but does not bind to TATA boxes. Synergises with GMNN and TBP in activation of TATA box-containing promoters and with GMNN and TBPL1 in activation of the NF1 TATA-less promoter. May play a role in cytoplasm movement and removal during spermiogenesis. The polypeptide is Spermatogenesis-associated protein 24 (Spata24) (Mus musculus (Mouse)).